The primary structure comprises 297 residues: Probable esterase afoC (297 aa).

Catalysis depends on Ser-136, which acts as the Charge relay system. Over residues 204–217 the composition is skewed to low complexity; sequence ASSSASASVSGSES. Residues 204–226 form a disordered region; it reads ASSSASASVSGSESAGEEEEDGH. Catalysis depends on charge relay system residues Asp-240 and His-267.

Belongs to the LovG family.

Its function is as follows. Probable esterase; part of the gene cluster that mediates the biosynthesis of asperfuranone, a probable antitumor agent. The polyketide synthase afoG is responsible for producing the 3,5-dimethyloctadienone moiety from acetyl-CoA, three malonyl-CoA, and two S-adenosyl methionines (SAM). The 3,5-dimethyloctadienone moiety is then loaded onto the SAT domain of afoE and extended with four malonyl-CoA and one SAM, which leads to the formation of 2,4-dihydroxy-6-(5,7-dimethyl-2-oxo-trans-3-trans-5-nonadienyl)-3-methylbenzaldehyde (compound 2) after reductive release and aldol condensation. AfoD is the next enzyme in the biosynthesis sequence and hydroxylates the side chain at the benzylic position of compound 2. After benzylic hydroxylation, a furan ring is formed after five-member ring hemiacetal formation and water elimination. AfoF and afoC are proposed to oxidize the R-diketone proton and to reduce the unconjugated carbonyl group, respectively, to generate asperfuranone. Since no intermediates could be isolated from afoF and afoC deletants, the sequence of these two enzymes is not fully understood. Moreover, since afoC deletant still produces a small amount of asperfuranone, other endogenous oxidoreductases might catalyze the same reaction with much less efficiency. This is Probable esterase afoC from Emericella nidulans (strain FGSC A4 / ATCC 38163 / CBS 112.46 / NRRL 194 / M139) (Aspergillus nidulans).